The sequence spans 298 residues: Probable alpha-L-glutamate ligase 2 (298 aa).

One can recognise an ATP-grasp domain in the interval 104–287; that stretch reads MQLLSRQGIG…VADAIICFME (184 aa). Residues lysine 141, 178–179, aspartate 187, and 211–213 contribute to the ATP site; these read EY and RSN. Aspartate 248, glutamate 260, and asparagine 262 together coordinate Mg(2+). The Mn(2+) site is built by aspartate 248, glutamate 260, and asparagine 262.

Belongs to the RimK family. The cofactor is Mg(2+). Requires Mn(2+) as cofactor.

This Shewanella frigidimarina (strain NCIMB 400) protein is Probable alpha-L-glutamate ligase 2.